Reading from the N-terminus, the 1159-residue chain is ATP-dependent helicase/deoxyribonuclease subunit B (1159 aa).

A UvrD-like helicase ATP-binding domain is found at 1-275; the sequence is MEFNTYIGRA…TYFNTFYRYN (275 aa). An ATP-binding site is contributed by 8–15; that stretch reads GRAGTGKS. The UvrD-like helicase C-terminal domain maps to 269 to 583; the sequence is NTFYRYNNDD…SIGTMDLAKV (315 aa). Residues C784, C1112, C1115, and C1121 each coordinate [4Fe-4S] cluster.

Belongs to the helicase family. AddB/RexB type 1 subfamily. As to quaternary structure, heterodimer of AddA and AddB. It depends on Mg(2+) as a cofactor. [4Fe-4S] cluster is required as a cofactor.

Its function is as follows. The heterodimer acts as both an ATP-dependent DNA helicase and an ATP-dependent, dual-direction single-stranded exonuclease. Recognizes the chi site generating a DNA molecule suitable for the initiation of homologous recombination. The AddB subunit has 5' -&gt; 3' nuclease activity but not helicase activity. The polypeptide is ATP-dependent helicase/deoxyribonuclease subunit B (Staphylococcus epidermidis (strain ATCC 35984 / DSM 28319 / BCRC 17069 / CCUG 31568 / BM 3577 / RP62A)).